The primary structure comprises 364 residues: Fructose-bisphosphate aldolase C (364 aa).

Phosphotyrosine is present on Tyr-5. 3 positions are modified to phosphoserine: Ser-36, Ser-39, and Ser-45. Residue Arg-56 participates in substrate binding. Residue Lys-111 is modified to N6-acetyllysine. Phosphoserine is present on Ser-132. A substrate-binding site is contributed by Lys-147. The active-site Proton acceptor is Glu-188. Lys-230 functions as the Schiff-base intermediate with dihydroxyacetone-P in the catalytic mechanism.

It belongs to the class I fructose-bisphosphate aldolase family. As to quaternary structure, homotetramer. Interacts with ATP6V1E1.

The catalysed reaction is beta-D-fructose 1,6-bisphosphate = D-glyceraldehyde 3-phosphate + dihydroxyacetone phosphate. Its pathway is carbohydrate degradation; glycolysis; D-glyceraldehyde 3-phosphate and glycerone phosphate from D-glucose: step 4/4. The chain is Fructose-bisphosphate aldolase C (ALDOC) from Pan troglodytes (Chimpanzee).